Consider the following 230-residue polypeptide: Orotidine 5'-phosphate decarboxylase (230 aa).

Substrate is bound by residues D10, K32, D59–T68, T119, R180, Q189, G209, and R210. The active-site Proton donor is K61.

The protein belongs to the OMP decarboxylase family. Type 1 subfamily. Homodimer.

It catalyses the reaction orotidine 5'-phosphate + H(+) = UMP + CO2. It participates in pyrimidine metabolism; UMP biosynthesis via de novo pathway; UMP from orotate: step 2/2. Functionally, catalyzes the decarboxylation of orotidine 5'-monophosphate (OMP) to uridine 5'-monophosphate (UMP). This Haemophilus influenzae (strain 86-028NP) protein is Orotidine 5'-phosphate decarboxylase.